The following is a 422-amino-acid chain: 3-isopropylmalate dehydratase large subunit (422 aa).

The [4Fe-4S] cluster site is built by Cys294, Cys354, and Cys357.

This sequence belongs to the aconitase/IPM isomerase family. LeuC type 2 subfamily. As to quaternary structure, heterodimer of LeuC and LeuD. The cofactor is [4Fe-4S] cluster.

It catalyses the reaction (2R,3S)-3-isopropylmalate = (2S)-2-isopropylmalate. Its pathway is amino-acid biosynthesis; L-leucine biosynthesis; L-leucine from 3-methyl-2-oxobutanoate: step 2/4. Catalyzes the isomerization between 2-isopropylmalate and 3-isopropylmalate, via the formation of 2-isopropylmaleate. This chain is 3-isopropylmalate dehydratase large subunit, found in Mycolicibacterium smegmatis (strain ATCC 700084 / mc(2)155) (Mycobacterium smegmatis).